The following is a 233-amino-acid chain: MPAKQRTAKVNRNPDLIRGVGKYSRSQMYHKRGLWAIKAKNGGVFPRHDAKSKVDAPVEKPPKFYPAEDVKKPLPNRRTAKPAKLRASITPGTVLIILAGRFKGKRVVFLKQLASGLLLVTGPFKINGVPLRRVNQAYVIGTSTKVDISGVTLDKFDDKYFGKVAEKKKKKTEGEFFEAEKEEKKEIPQGKKDDQKAVDAALIKAIEAVPELKTYLGARFSLKQGMKPHELVF.

A compositionally biased stretch (basic and acidic residues) spans 48 to 72 (HDAKSKVDAPVEKPPKFYPAEDVKK). The segment at 48–82 (HDAKSKVDAPVEKPPKFYPAEDVKKPLPNRRTAKP) is disordered.

This sequence belongs to the eukaryotic ribosomal protein eL6 family.

The sequence is that of Large ribosomal subunit protein eL6y (RPL6B) from Arabidopsis thaliana (Mouse-ear cress).